Here is an 88-residue protein sequence, read N- to C-terminus: Small ribosomal subunit protein uS17 (88 aa).

Belongs to the universal ribosomal protein uS17 family. As to quaternary structure, part of the 30S ribosomal subunit.

Its function is as follows. One of the primary rRNA binding proteins, it binds specifically to the 5'-end of 16S ribosomal RNA. This chain is Small ribosomal subunit protein uS17, found in Prochlorococcus marinus (strain MIT 9515).